The sequence spans 143 residues: Photosystem I reaction center subunit IV A, chloroplastic (143 aa).

The transit peptide at 1 to 44 (MAMTTASTVFVLPANVTSVAGASSSRSSVSFLPMRNAGSRLVVR) directs the protein to the chloroplast. The interval 43–85 (VRAAEDPAPASSSSKDSPAAAAAPDGATATKPKPPPIGPKRGS) is disordered. Residues 48–73 (DPAPASSSSKDSPAAAAAPDGATATK) are compositionally biased toward low complexity.

The protein belongs to the PsaE family. 2 isoforms may exist. With or without the N-terminal alanine.

The protein resides in the plastid. It localises to the chloroplast thylakoid membrane. In terms of biological role, stabilizes the interaction between PsaC and the PSI core, assists the docking of the ferredoxin to PSI and interacts with ferredoxin-NADP oxidoreductase. In Arabidopsis thaliana (Mouse-ear cress), this protein is Photosystem I reaction center subunit IV A, chloroplastic (PSAE1).